An 882-amino-acid polypeptide reads, in one-letter code: Alanine--tRNA ligase (882 aa).

Residues His-570, His-574, Cys-672, and His-676 each coordinate Zn(2+).

The protein belongs to the class-II aminoacyl-tRNA synthetase family. Requires Zn(2+) as cofactor.

Its subcellular location is the cytoplasm. It carries out the reaction tRNA(Ala) + L-alanine + ATP = L-alanyl-tRNA(Ala) + AMP + diphosphate. Its function is as follows. Catalyzes the attachment of alanine to tRNA(Ala) in a two-step reaction: alanine is first activated by ATP to form Ala-AMP and then transferred to the acceptor end of tRNA(Ala). Also edits incorrectly charged Ser-tRNA(Ala) and Gly-tRNA(Ala) via its editing domain. The sequence is that of Alanine--tRNA ligase from Xanthomonas euvesicatoria pv. vesicatoria (strain 85-10) (Xanthomonas campestris pv. vesicatoria).